The following is a 151-amino-acid chain: Histone H2A.2.2 (151 aa).

The residue at position 1 (Met1) is an N-acetylmethionine. The segment at 129 to 151 (EKAEKAGTKAKSPKKATKSPKKA) is disordered. Over residues 139-151 (KSPKKATKSPKKA) the composition is skewed to basic residues. 2 short sequence motifs (SPKK motif) span residues 140-143 (SPKK) and 147-150 (SPKK).

It belongs to the histone H2A family. As to quaternary structure, the nucleosome is a histone octamer containing two molecules each of H2A, H2B, H3 and H4 assembled in one H3-H4 heterotetramer and two H2A-H2B heterodimers. The octamer wraps approximately 147 bp of DNA. Post-translationally, phosphorylated within its C-terminal part, probably at the SPKK motifs.

The protein localises to the nucleus. It localises to the chromosome. Its function is as follows. Core component of nucleosome. Nucleosomes wrap and compact DNA into chromatin, limiting DNA accessibility to the cellular machineries which require DNA as a template. Histones thereby play a central role in transcription regulation, DNA repair, DNA replication and chromosomal stability. DNA accessibility is regulated via a complex set of post-translational modifications of histones, also called histone code, and nucleosome remodeling. The polypeptide is Histone H2A.2.2 (Triticum aestivum (Wheat)).